The sequence spans 214 residues: ATP phosphoribosyltransferase (214 aa).

The protein belongs to the ATP phosphoribosyltransferase family. Short subfamily. As to quaternary structure, heteromultimer composed of HisG and HisZ subunits.

It is found in the cytoplasm. The enzyme catalyses 1-(5-phospho-beta-D-ribosyl)-ATP + diphosphate = 5-phospho-alpha-D-ribose 1-diphosphate + ATP. Its pathway is amino-acid biosynthesis; L-histidine biosynthesis; L-histidine from 5-phospho-alpha-D-ribose 1-diphosphate: step 1/9. Catalyzes the condensation of ATP and 5-phosphoribose 1-diphosphate to form N'-(5'-phosphoribosyl)-ATP (PR-ATP). Has a crucial role in the pathway because the rate of histidine biosynthesis seems to be controlled primarily by regulation of HisG enzymatic activity. The polypeptide is ATP phosphoribosyltransferase (Streptococcus sanguinis (strain SK36)).